A 248-amino-acid chain; its full sequence is Pyridoxine 5'-phosphate synthase (248 aa).

3-amino-2-oxopropyl phosphate-binding residues include asparagine 8 and arginine 19. Residue histidine 44 is the Proton acceptor of the active site. Positions 46 and 51 each coordinate 1-deoxy-D-xylulose 5-phosphate. Glutamate 76 (proton acceptor) is an active-site residue. Threonine 106 is a 1-deoxy-D-xylulose 5-phosphate binding site. The active-site Proton donor is the histidine 200. 3-amino-2-oxopropyl phosphate contacts are provided by residues aspartate 201 and 223 to 224; that span reads GH.

The protein belongs to the PNP synthase family. In terms of assembly, homooctamer; tetramer of dimers.

The protein resides in the cytoplasm. It carries out the reaction 3-amino-2-oxopropyl phosphate + 1-deoxy-D-xylulose 5-phosphate = pyridoxine 5'-phosphate + phosphate + 2 H2O + H(+). The protein operates within cofactor biosynthesis; pyridoxine 5'-phosphate biosynthesis; pyridoxine 5'-phosphate from D-erythrose 4-phosphate: step 5/5. Catalyzes the complicated ring closure reaction between the two acyclic compounds 1-deoxy-D-xylulose-5-phosphate (DXP) and 3-amino-2-oxopropyl phosphate (1-amino-acetone-3-phosphate or AAP) to form pyridoxine 5'-phosphate (PNP) and inorganic phosphate. This Chelativorans sp. (strain BNC1) protein is Pyridoxine 5'-phosphate synthase.